Here is a 244-residue protein sequence, read N- to C-terminus: MMNHTPLLLGIRERLIFALDVPSRTQALEWIDQLGDAISFYKIGMELLASGEYFQVLDDLASRGKRVFVDLKFFDIPATVAGVIRRLSQWPISYCTIHGWHAPMMQAATEANTSNMHLLAVTVLTSMTREDLAKMGINREPVDVVVERALAAHMAGMSGVIASGQEAAAIRRAVGSGFSIVCPGIRTNHVPHNDQQRTIGIKAAFANGADAIVVGRPIRMAQDPQAAAEAMQTEIMTALTEPST.

Substrate contacts are provided by residues aspartate 20, lysine 42, aspartate 70–threonine 79, threonine 125, arginine 186, glutamine 195, glycine 215, and arginine 216. The active-site Proton donor is lysine 72.

It belongs to the OMP decarboxylase family. Type 1 subfamily. As to quaternary structure, homodimer.

It carries out the reaction orotidine 5'-phosphate + H(+) = UMP + CO2. The protein operates within pyrimidine metabolism; UMP biosynthesis via de novo pathway; UMP from orotate: step 2/2. Functionally, catalyzes the decarboxylation of orotidine 5'-monophosphate (OMP) to uridine 5'-monophosphate (UMP). This chain is Orotidine 5'-phosphate decarboxylase, found in Xylella fastidiosa (strain M12).